An 84-amino-acid polypeptide reads, in one-letter code: Toluene-4-monooxygenase system, hydroxylase component subunit gamma (84 aa).

The protein belongs to the TmoB/XamoB family. As to quaternary structure, the alkene monooxygenase multicomponent enzyme system is composed of an electron transfer component and a monooxygenase component interacting with the effector protein TmoD. The electron transfer component is composed of a ferredoxin reductase (TmoF) and a ferredoxin (TmoC), and the monooxygenase component is formed by a heterohexamer (dimer of heterotrimers) of two alpha subunits (TmoA), two beta subunits (TmoE) and two gamma subunits (TmoB).

The catalysed reaction is toluene + NADH + O2 + H(+) = 4-methylphenol + NAD(+) + H2O. Its pathway is xenobiotic degradation; toluene degradation. Inhibited by Zn(2+) and Cu(2+). Component of the toluene-4-monooxygenase multicomponent enzyme system which catalyzes the O2- and NADH-dependent hydroxylation of toluene to form p-cresol. Also able to convert benzene to phenol, catechol, and 1,2,3-trihydroxybenzene by successive hydroxylations. The polypeptide is Toluene-4-monooxygenase system, hydroxylase component subunit gamma (Ectopseudomonas mendocina (Pseudomonas mendocina)).